A 61-amino-acid polypeptide reads, in one-letter code: Protein MATERNALLY EXPRESSED GENE 6 (61 aa).

A disulfide bridge links C38 with C60.

Belongs to the MEG family. In terms of tissue distribution, ubiquitous.

This Zea mays (Maize) protein is Protein MATERNALLY EXPRESSED GENE 6 (MEG6).